The sequence spans 114 residues: MAEITSAKAMARTVRVSPRKSRLILDNIRGKNVADAIAILKFTPNKAAGIIEKVLNSAIANAENNFGLEKANLVVSEAFANEGPTMKRFRPRAKGSASPINKRTSHITVVVAEK.

Belongs to the universal ribosomal protein uL22 family. In terms of assembly, part of the 50S ribosomal subunit.

In terms of biological role, this protein binds specifically to 23S rRNA; its binding is stimulated by other ribosomal proteins, e.g. L4, L17, and L20. It is important during the early stages of 50S assembly. It makes multiple contacts with different domains of the 23S rRNA in the assembled 50S subunit and ribosome. The globular domain of the protein is located near the polypeptide exit tunnel on the outside of the subunit, while an extended beta-hairpin is found that lines the wall of the exit tunnel in the center of the 70S ribosome. This Streptococcus gordonii (strain Challis / ATCC 35105 / BCRC 15272 / CH1 / DL1 / V288) protein is Large ribosomal subunit protein uL22.